Here is a 352-residue protein sequence, read N- to C-terminus: UDP-N-acetylglucosamine--N-acetylmuramyl-(pentapeptide) pyrophosphoryl-undecaprenol N-acetylglucosamine transferase (352 aa).

UDP-N-acetyl-alpha-D-glucosamine contacts are provided by residues 13-15, asparagine 125, arginine 161, serine 189, isoleucine 242, 261-266, and glutamine 286; these read TGG and ALTVSE.

The protein belongs to the glycosyltransferase 28 family. MurG subfamily.

The protein localises to the cell inner membrane. It catalyses the reaction di-trans,octa-cis-undecaprenyl diphospho-N-acetyl-alpha-D-muramoyl-L-alanyl-D-glutamyl-meso-2,6-diaminopimeloyl-D-alanyl-D-alanine + UDP-N-acetyl-alpha-D-glucosamine = di-trans,octa-cis-undecaprenyl diphospho-[N-acetyl-alpha-D-glucosaminyl-(1-&gt;4)]-N-acetyl-alpha-D-muramoyl-L-alanyl-D-glutamyl-meso-2,6-diaminopimeloyl-D-alanyl-D-alanine + UDP + H(+). It participates in cell wall biogenesis; peptidoglycan biosynthesis. Cell wall formation. Catalyzes the transfer of a GlcNAc subunit on undecaprenyl-pyrophosphoryl-MurNAc-pentapeptide (lipid intermediate I) to form undecaprenyl-pyrophosphoryl-MurNAc-(pentapeptide)GlcNAc (lipid intermediate II). The sequence is that of UDP-N-acetylglucosamine--N-acetylmuramyl-(pentapeptide) pyrophosphoryl-undecaprenol N-acetylglucosamine transferase from Erwinia tasmaniensis (strain DSM 17950 / CFBP 7177 / CIP 109463 / NCPPB 4357 / Et1/99).